The sequence spans 858 residues: Piwi-like protein 1 (858 aa).

A compositionally biased stretch (basic residues) spans 1–13 (MTGRARARSRGRG). Residues 1-56 (MTGRARARSRGRGRGQEPAAPGAQPPVSQEAAKPVVSTPSEGQLVGRGRQKPAPGA) form a disordered region. Residues 16 to 26 (QEPAAPGAQPP) are compositionally biased toward low complexity. Positions 276 to 388 (TVLDFMYSLR…LVPEFCYLTG (113 aa)) constitute a PAZ domain. Positions 314–316 (TYR) are required for binding 2'-O-methylated 3'-end of piRNAs. The tract at residues 476–612 (SKEMRGLPLI…LQMNCKMGGE (137 aa)) is MID region. Positions 552-844 (MVVVILPTNR…LAFLVGQSIH (293 aa)) constitute a Piwi domain. Catalysis depends on residues D629, E667, D699, and H833.

The protein belongs to the argonaute family. Piwi subfamily. The cofactor is Mg(2+). In terms of processing, methylated on arginine residues; required for the interaction with Tudor domain-containing protein and subsequent localization to the meiotic nuage, also named P granule. In terms of tissue distribution, expressed exclusively in the adult gonads; expression in the ovary weaker than in the testis (at protein level). During neurogenesis and organogenesis, expression is detected in CNS (midbrain and eye) and fin buds. Starting from 24 hours post-fertilization, expression is found in the genital ridge.

Its subcellular location is the cytoplasm. Plays a central role during gametogenesis by repressing transposable elements and preventing their mobilization, which is essential for the germline integrity. Acts via the piRNA metabolic process, which mediates the repression of transposable elements during meiosis by forming complexes composed of piRNAs and Piwi proteins and governs the methylation and subsequent repression of transposons. Directly binds methylated piRNAs, a class of 24 to 30 nucleotide RNAs that are generated by a Dicer-independent mechanism and are primarily derived from transposons and other repeated sequence elements. Has a strong preference for piRNAs with a uridine nucleotide at their 5'-end (g1U preference, also named 1U-bias) and binds piRNAs in an opposite direction compared to piwil2/zili. Participates in a piRNA amplification loop with piwil2/zili. Not involved in the piRNA amplification loop, also named ping-pong amplification cycle. Acts as an endoribonuclease that cleaves transposon messenger RNAs. This Danio rerio (Zebrafish) protein is Piwi-like protein 1 (piwil1).